A 21-amino-acid polypeptide reads, in one-letter code: Hydroxypicolinic acid-activating enzyme (21 aa).

In terms of biological role, involved in etamycin biosynthesis. The protein is Hydroxypicolinic acid-activating enzyme of Streptomyces griseoviridis.